The primary structure comprises 320 residues: tRNA (guanosine(34)-2'-O)-methyltransferase (320 aa).

5 residues coordinate S-adenosyl-L-methionine: Gly53, Trp55, Asp81, Asp97, and Asp122. The active-site Proton acceptor is the Lys162.

This sequence belongs to the class I-like SAM-binding methyltransferase superfamily. RNA methyltransferase RlmE family. TRM7 subfamily. Interacts with CG33172/WDR6.

Its subcellular location is the cytoplasm. The enzyme catalyses cytidine(32)/guanosine(34) in tRNA + 2 S-adenosyl-L-methionine = 2'-O-methylcytidine(32)/2'-O-methylguanosine(34) in tRNA + 2 S-adenosyl-L-homocysteine + 2 H(+). Methylates the 2'-O-ribose of nucleotides at position 34 of the tRNA anticodon loop of substrate tRNAs. May require WDR6 for methylation of the nucleotide at position 34 of the anticodon loop of substrate tRNAs. Plays a role in neurogenesis. Requisite for RNA-mediated gene silencing. Modifies position 34 in tRNA(Leu(CAA)), tRNA(Leu(CAG)), tRNA(Phe(GAA)), and tRNA(Trp(CCA)). This chain is tRNA (guanosine(34)-2'-O)-methyltransferase, found in Drosophila melanogaster (Fruit fly).